Reading from the N-terminus, the 112-residue chain is MGLKEYKFGFESENIAVKFLKSHGYEILERNFHSRFGEIDIIAKKDEILHFIEVKATSKNYETAYRITSYKFSKILKTIKFYITKKQNETDFQVDFIGINKEKISFIENISL.

Belongs to the UPF0102 family.

The sequence is that of UPF0102 protein CHAB381_0216 from Campylobacter hominis (strain ATCC BAA-381 / DSM 21671 / CCUG 45161 / LMG 19568 / NCTC 13146 / CH001A).